The following is a 367-amino-acid chain: tRNA pseudouridine synthase D (367 aa).

D80 (nucleophile) is an active-site residue. In terms of domain architecture, TRUD spans 156–316; the sequence is GIPNWFGEQR…LKQERRALRL (161 aa).

The protein belongs to the pseudouridine synthase TruD family.

The catalysed reaction is uridine(13) in tRNA = pseudouridine(13) in tRNA. Responsible for synthesis of pseudouridine from uracil-13 in transfer RNAs. The sequence is that of tRNA pseudouridine synthase D from Xanthomonas campestris pv. campestris (strain 8004).